Reading from the N-terminus, the 174-residue chain is Nucleoside diphosphate kinase (174 aa).

Lys14, Phe62, Arg90, Thr96, and Arg107 together coordinate ATP. His123 (pros-phosphohistidine intermediate) is an active-site residue.

This sequence belongs to the NDK family. Requires Mg(2+) as cofactor.

The protein resides in the cytoplasm. It catalyses the reaction a 2'-deoxyribonucleoside 5'-diphosphate + ATP = a 2'-deoxyribonucleoside 5'-triphosphate + ADP. The catalysed reaction is a ribonucleoside 5'-diphosphate + ATP = a ribonucleoside 5'-triphosphate + ADP. Its function is as follows. Major role in the synthesis of nucleoside triphosphates other than ATP. The ATP gamma phosphate is transferred to the NDP beta phosphate via a ping-pong mechanism, using a phosphorylated active-site intermediate. The protein is Nucleoside diphosphate kinase of Thermococcus kodakarensis (strain ATCC BAA-918 / JCM 12380 / KOD1) (Pyrococcus kodakaraensis (strain KOD1)).